We begin with the raw amino-acid sequence, 246 residues long: V-type proton ATPase subunit D (246 aa).

The protein belongs to the V-ATPase D subunit family. In terms of assembly, V-ATPase is a heteromultimeric enzyme made up of two complexes: the ATP-hydrolytic V1 complex and the proton translocation V0 complex. The V1 complex consists of three catalytic AB heterodimers that form a heterohexamer, three peripheral stalks each consisting of EG heterodimers, one central rotor including subunits D and F, and the regulatory subunits C and H. The proton translocation complex V0 consists of the proton transport subunit a, a ring of proteolipid subunits c9c'', rotary subunit d, subunits e and f, and the accessory subunits VhaAC45 and ATP6AP2.

Functionally, subunit of the V1 complex of vacuolar(H+)-ATPase (V-ATPase), a multisubunit enzyme composed of a peripheral complex (V1) that hydrolyzes ATP and a membrane integral complex (V0) that translocates protons. V-ATPase is responsible for acidifying and maintaining the pH of intracellular compartments and in some cell types, is targeted to the plasma membrane, where it is responsible for acidifying the extracellular environment. The sequence is that of V-type proton ATPase subunit D from Manduca sexta (Tobacco hawkmoth).